A 107-amino-acid chain; its full sequence is Phosphoribosyl-ATP pyrophosphatase (107 aa).

This sequence belongs to the PRA-PH family.

It is found in the cytoplasm. The enzyme catalyses 1-(5-phospho-beta-D-ribosyl)-ATP + H2O = 1-(5-phospho-beta-D-ribosyl)-5'-AMP + diphosphate + H(+). Its pathway is amino-acid biosynthesis; L-histidine biosynthesis; L-histidine from 5-phospho-alpha-D-ribose 1-diphosphate: step 2/9. This Bacillus cytotoxicus (strain DSM 22905 / CIP 110041 / 391-98 / NVH 391-98) protein is Phosphoribosyl-ATP pyrophosphatase.